The sequence spans 280 residues: Small ribosomal subunit protein uS3 (280 aa).

Positions 38-106 constitute a KH type-2 domain; the sequence is IRRLLSTGLE…QVQLNILEVR (69 aa). The segment at 215–280 is disordered; that stretch reads AAAAPAGAER…PAAEPQSTES (66 aa). A compositionally biased stretch (low complexity) spans 238–280; the sequence is SGASGTTATGTEAGRAAASADESTAAGQPAEAAPAAEPQSTES.

The protein belongs to the universal ribosomal protein uS3 family. In terms of assembly, part of the 30S ribosomal subunit. Forms a tight complex with proteins S10 and S14.

Its function is as follows. Binds the lower part of the 30S subunit head. Binds mRNA in the 70S ribosome, positioning it for translation. The sequence is that of Small ribosomal subunit protein uS3 from Mycobacterium avium (strain 104).